The following is a 1407-amino-acid chain: DNA-directed RNA polymerase subunit beta' (1407 aa).

The Zn(2+) site is built by Cys-70, Cys-72, Cys-85, and Cys-88. Mg(2+) is bound by residues Asp-460, Asp-462, and Asp-464. Zn(2+)-binding residues include Cys-814, Cys-888, Cys-895, and Cys-898. Lys-972 carries the post-translational modification N6-acetyllysine.

It belongs to the RNA polymerase beta' chain family. In terms of assembly, the RNAP catalytic core consists of 2 alpha, 1 beta, 1 beta' and 1 omega subunit. When a sigma factor is associated with the core the holoenzyme is formed, which can initiate transcription. Mg(2+) serves as cofactor. Requires Zn(2+) as cofactor.

It carries out the reaction RNA(n) + a ribonucleoside 5'-triphosphate = RNA(n+1) + diphosphate. DNA-dependent RNA polymerase catalyzes the transcription of DNA into RNA using the four ribonucleoside triphosphates as substrates. The protein is DNA-directed RNA polymerase subunit beta' of Shigella sonnei (strain Ss046).